We begin with the raw amino-acid sequence, 309 residues long: Olfactory receptor 4B1 (309 aa).

Topologically, residues 1–23 are extracellular; sequence MASTSNVTELIFTGLFQDPAVQS. N-linked (GlcNAc...) asparagine glycosylation is present at N6. A helical membrane pass occupies residues 24 to 47; it reads VCFVVFLPVYLATVVGNGLIVLTV. Topologically, residues 48-55 are cytoplasmic; it reads SISKSLDS. The chain crosses the membrane as a helical span at residues 56 to 77; sequence PMYFFLSCLSLVEISYSSTIAP. Residues 78-98 are Extracellular-facing; sequence KFIIDLLAKIKTISLEGCLTQ. C95 and C187 are joined by a disulfide. Residues 99–118 traverse the membrane as a helical segment; it reads IFFFHFFGVAEILLIVVMAY. Residues 119–137 lie on the Cytoplasmic side of the membrane; that stretch reads DCYVAICKPLHYMNIISRQ. The helical transmembrane segment at 138-156 threads the bilayer; that stretch reads LCHLLVAGSWLGGFCHSII. Over 157 to 193 the chain is Extracellular; it reads QILVIIQLPFCGPNVIDHYFCDLQPLFKLACTDTFME. The chain crosses the membrane as a helical span at residues 194–217; the sequence is GVIVLANSGLFSVFSFLILVSSYI. The Cytoplasmic segment spans residues 218 to 233; it reads VILVNLRNHSAEGRHK. The chain crosses the membrane as a helical span at residues 234-256; that stretch reads ALSTCASHITVVILFFGPAIFLY. The Extracellular portion of the chain corresponds to 257-267; sequence MRPSSTFTEDK. Residues 268-287 traverse the membrane as a helical segment; it reads LVAVFYTVITPMLNPIIYTL. Residues 288–309 are Cytoplasmic-facing; sequence RNAEVKIAIRRLWSKKENPGRE.

Belongs to the G-protein coupled receptor 1 family.

Its subcellular location is the cell membrane. Functionally, odorant receptor. This chain is Olfactory receptor 4B1 (OR4B1), found in Homo sapiens (Human).